Here is a 611-residue protein sequence, read N- to C-terminus: Muscarinic acetylcholine receptor gar-3 (611 aa).

Topologically, residues 1–67 (MQSSSLGNAD…LLGEEGRMVM (67 aa)) are extracellular. N-linked (GlcNAc...) asparagine glycans are attached at residues Asn-28 and Asn-33. A helical transmembrane segment spans residues 68–88 (IVVIGAMFALVTSLGNLMVMV). Over 89-101 (SFKIDKQLQTISN) the chain is Cytoplasmic. Residues 102–122 (YFLFSLAVADIAIGVISIPMF) form a helical membrane-spanning segment. Residues 123–140 (TYYTAIQKWDLGYTMCQF) lie on the Extracellular side of the membrane. A disulfide bridge connects residues Cys-138 and Cys-218. Residues 141 to 161 (WLCIDYLMSNASVLNLLLISF) traverse the membrane as a helical segment. At 162 to 181 (DRYFSVTRPLSYRPRRTTKK) the chain is on the cytoplasmic side. A helical membrane pass occupies residues 182–202 (ALTMIACTYIISLILWPPWII). Topologically, residues 203–227 (SWPYIEGKFTAEPGTCVVQFLQTNP) are extracellular. A helical transmembrane segment spans residues 228-248 (YVTVGTAVAAFYLPVTIMCIL). The Cytoplasmic portion of the chain corresponds to 249–525 (YTRVYWETQK…RKQESKAAKT (277 aa)). Disordered regions lie at residues 299 to 364 (RRSM…SSEA), 377 to 432 (SHFA…NNNS), 446 to 477 (SRPS…NSEI), and 500 to 519 (FSSQ…RKQE). Residues 307–317 (SSTSIIKSSGS) show a composition bias toward low complexity. Basic and acidic residues predominate over residues 503–519 (QERKSEKEQRKNERKQE). The helical transmembrane segment at 526 to 546 (LSAILCAFIATWTPYNLIVCW) threads the bilayer. Over 547-557 (EAFFPNTVPNV) the chain is Extracellular. A helical membrane pass occupies residues 558–578 (LWTFSYFLCYINSTINPLCYA). The Cytoplasmic segment spans residues 579–611 (LCNARFRHTYMRILRCKFKAERPTMNQGYVRRN).

Belongs to the G-protein coupled receptor 1 family. Muscarinic acetylcholine receptor subfamily.

The protein localises to the cell membrane. Its function is as follows. The muscarinic acetylcholine receptor mediates various cellular responses, including inhibition of adenylate cyclase, breakdown of phosphoinositides and modulation of potassium channels through the action of G proteins. Primary transducing effect is Pi turnover. Enhances the release of the neurotransmitter acetlycholine in cholinergic motor neurons, which in turn positively feeds back to depolarize body wall muscles and allows for the maintenance of normal body posture and locomotion. The polypeptide is Muscarinic acetylcholine receptor gar-3 (gar-3) (Caenorhabditis elegans).